The following is a 527-amino-acid chain: Amine oxidase [flavin-containing] A (527 aa).

An N-acetylmethionine modification is found at Met-1. At 1-497 the chain is on the cytoplasmic side; sequence MENQEKASIA…HTFWERNLPS (497 aa). Phosphoserine is present on Ser-383. Cys-406 is subject to S-8alpha-FAD cysteine. The chain crosses the membrane as a helical; Anchor for type IV membrane protein span at residues 498–518; that stretch reads VSGLLKIIGFSTSVTALGFVL. The Mitochondrial intermembrane portion of the chain corresponds to 519–527; it reads YKYKLLPRS. An interaction with membrane phospholipid headgroups region spans residues 520–522; sequence KYK.

This sequence belongs to the flavin monoamine oxidase family. Monomer, homo- or heterodimer (containing two subunits of similar size). Each subunit contains a covalently bound flavin. Enzymatically active as monomer. It depends on FAD as a cofactor.

It localises to the mitochondrion outer membrane. It catalyses the reaction a secondary aliphatic amine + O2 + H2O = a primary amine + an aldehyde + H2O2. The catalysed reaction is a primary methyl amine + O2 + H2O = an aldehyde + H2O2 + NH4(+). The enzyme catalyses (R)-adrenaline + O2 + H2O = (R)-3,4-dihydroxymandelaldehyde + methylamine + H2O2. It carries out the reaction dopamine + O2 + H2O = 3,4-dihydroxyphenylacetaldehyde + H2O2 + NH4(+). It catalyses the reaction tyramine + O2 + H2O = (4-hydroxyphenyl)acetaldehyde + H2O2 + NH4(+). The catalysed reaction is (R)-noradrenaline + O2 + H2O = (R)-3,4-dihydroxymandelaldehyde + H2O2 + NH4(+). The enzyme catalyses serotonin + O2 + H2O = (5-hydroxyindol-3-yl)acetaldehyde + H2O2 + NH4(+). It carries out the reaction kynuramine + O2 + H2O = 3-(2-aminophenyl)-3-oxopropanal + H2O2 + NH4(+). It catalyses the reaction tryptamine + O2 + H2O = indole-3-acetaldehyde + H2O2 + NH4(+). The catalysed reaction is 2-phenylethylamine + O2 + H2O = 2-phenylacetaldehyde + H2O2 + NH4(+). In terms of biological role, catalyzes the oxidative deamination of primary and some secondary amine such as neurotransmitters, with concomitant reduction of oxygen to hydrogen peroxide and has important functions in the metabolism of neuroactive and vasoactive amines in the central nervous system and peripheral tissues. Preferentially oxidizes serotonin. Also catalyzes the oxidative deamination of kynuramine to 3-(2-aminophenyl)-3-oxopropanal that can spontaneously condense to 4-hydroxyquinoline. This Pongo abelii (Sumatran orangutan) protein is Amine oxidase [flavin-containing] A.